Here is a 183-residue protein sequence, read N- to C-terminus: Potassium-transporting ATPase KdpC subunit (183 aa).

The chain crosses the membrane as a helical span at residues 10 to 30; the sequence is LTVFTLILFAVIYPLAIYGIA.

The protein belongs to the KdpC family. In terms of assembly, the system is composed of three essential subunits: KdpA, KdpB and KdpC.

The protein resides in the cell inner membrane. Functionally, part of the high-affinity ATP-driven potassium transport (or Kdp) system, which catalyzes the hydrolysis of ATP coupled with the electrogenic transport of potassium into the cytoplasm. This subunit acts as a catalytic chaperone that increases the ATP-binding affinity of the ATP-hydrolyzing subunit KdpB by the formation of a transient KdpB/KdpC/ATP ternary complex. The sequence is that of Potassium-transporting ATPase KdpC subunit from Flavobacterium johnsoniae (strain ATCC 17061 / DSM 2064 / JCM 8514 / BCRC 14874 / CCUG 350202 / NBRC 14942 / NCIMB 11054 / UW101) (Cytophaga johnsonae).